We begin with the raw amino-acid sequence, 503 residues long: Probable DNA ligase (503 aa).

Residue D212 coordinates ATP. Residue K214 is the N6-AMP-lysine intermediate of the active site. Residues R219, R234, E263, F296, R368, and K374 each contribute to the ATP site.

It belongs to the ATP-dependent DNA ligase family. Mg(2+) serves as cofactor.

The enzyme catalyses ATP + (deoxyribonucleotide)n-3'-hydroxyl + 5'-phospho-(deoxyribonucleotide)m = (deoxyribonucleotide)n+m + AMP + diphosphate.. In terms of biological role, DNA ligase that seals nicks in double-stranded DNA during DNA replication, DNA recombination and DNA repair. The sequence is that of Probable DNA ligase from Kineococcus radiotolerans (strain ATCC BAA-149 / DSM 14245 / SRS30216).